The following is a 306-amino-acid chain: BRCA2 and CDKN1A-interacting protein (306 aa).

A compositionally biased stretch (basic residues) spans 1 to 10 (MASRPKRRAV). The disordered stretch occupies residues 1–45 (MASRPKRRAVSRVPPALGDEEEEDEVEEQDEDDSDEEEDEEDEVV). A compositionally biased stretch (acidic residues) spans 18 to 45 (GDEEEEDEVEEQDEDDSDEEEDEEDEVV). Phosphoserine is present on residues S34 and S104. An interaction with BRCA2 region spans residues 51–159 (IEFEAYSISD…EKSMVEQLDR (109 aa)). Residues 153-251 (MVEQLDRLFN…NAEEEFFYEK (99 aa)) are interaction with CDKN1A. S273 carries the post-translational modification Phosphoserine.

The protein belongs to the BCP1 family. As to quaternary structure, interacts with BRCA2, CDKN1A and MTDH/LYRIC. Interacts with DCTN1/p150-glued and ACTR1A/ARP1. Interacts with alpha-, beta- and gamma-tubulins. Interacts with TENT5C; the interaction has no effect on TENT5C poly(A) polymerase function.

The protein resides in the nucleus. It localises to the cytoplasm. Its subcellular location is the cytoskeleton. It is found in the microtubule organizing center. The protein localises to the centrosome. The protein resides in the centriole. It localises to the spindle pole. In terms of biological role, during interphase, required for microtubule organizing and anchoring activities. During mitosis, required for the organization and stabilization of the spindle pole. May promote cell cycle arrest by enhancing the inhibition of CDK2 activity by CDKN1A. May be required for repair of DNA damage by homologous recombination in conjunction with BRCA2. May not be involved in non-homologous end joining (NHEJ). This is BRCA2 and CDKN1A-interacting protein (BCCIP) from Bos taurus (Bovine).